Consider the following 693-residue polypeptide: Golgin subfamily A member 6A (693 aa).

The stretch at 14–611 (LEESRQNKLA…KLLELQELVL (598 aa)) forms a coiled coil. 3 disordered regions span residues 20 to 69 (NKLA…PGDS), 497 to 547 (LPGE…GTEQ), and 661 to 693 (NVEP…MQDT). Residues 54–69 (SPETTTSGGCHSPGDS) show a composition bias toward polar residues. Residues 537-547 (LPKEKADGTEQ) are compositionally biased toward basic and acidic residues. Over residues 676 to 693 (DNPTVQQIVQLSPVMQDT) the composition is skewed to polar residues.

The protein belongs to the GOLGA6 family. In terms of tissue distribution, highly expressed in seminiferous tubes in testis. Highly expressed in spermatids, barely detectable in late pachytene spermatocytes, and not detectable in spermatogonia. Detected at intermediate levels in pancreas and lymph nodes, and at much lower levels in spleen, peripheral blood leukocytes, skeletal muscle, liver, lung, placenta, brain and heart.

The protein is Golgin subfamily A member 6A (GOLGA6A) of Homo sapiens (Human).